We begin with the raw amino-acid sequence, 400 residues long: MKFVDEVQIRVDAGDGGNGCVSFRREKYIPNGGPDGGDGGDGGDVYLVADENLNTLIDYRFERFHAAERGENGQSANCTGRRGKDRILRVPVGTRASDEDTGELLGDLTHHEQKLLVAKGGFHGLGNTRFKSSVNRAPRQKSNGTPGEVRTLKLELLLLADVGMLGLPNAGKSTFIRAVSAARPKVADYPFTTLVPNLGVVRGENSRSFVIADIPGLIEGAAEGAGLGIRFLKHLERCRVLIHLVDICPVDGSDPAENAVTIVRELEKYSPELASKPRWLVFNKMDLILEEEAQEVMDRVKTALNHEGPVYAITAISKEGTKKVCYDILDLLDTMPRQLAEDAKDAIEKVEFKWDDYHKNQLAKAEADALAASKAFDESLDDDEWDDEDDDGVEVIYVRD.

The Obg domain occupies 1 to 159 (MKFVDEVQIR…RTLKLELLLL (159 aa)). In terms of domain architecture, OBG-type G spans 160-333 (ADVGMLGLPN…VCYDILDLLD (174 aa)). Residues 166-173 (GLPNAGKS), 191-195 (FTTLV), 213-216 (DIPG), 283-286 (NKMD), and 314-316 (TAI) contribute to the GTP site. Mg(2+)-binding residues include S173 and T193.

The protein belongs to the TRAFAC class OBG-HflX-like GTPase superfamily. OBG GTPase family. In terms of assembly, monomer. The cofactor is Mg(2+).

The protein resides in the cytoplasm. An essential GTPase which binds GTP, GDP and possibly (p)ppGpp with moderate affinity, with high nucleotide exchange rates and a fairly low GTP hydrolysis rate. Plays a role in control of the cell cycle, stress response, ribosome biogenesis and in those bacteria that undergo differentiation, in morphogenesis control. This chain is GTPase Obg, found in Aeromonas hydrophila subsp. hydrophila (strain ATCC 7966 / DSM 30187 / BCRC 13018 / CCUG 14551 / JCM 1027 / KCTC 2358 / NCIMB 9240 / NCTC 8049).